A 400-amino-acid chain; its full sequence is Acetate kinase (400 aa).

Position 10 (Asn-10) interacts with Mg(2+). Lys-17 is an ATP binding site. Arg-91 lines the substrate pocket. The Proton donor/acceptor role is filled by Asp-150. Residues His-210–Gly-214, Asp-285–Arg-287, and Gly-333–Asn-337 each bind ATP. Residue Glu-387 participates in Mg(2+) binding.

Belongs to the acetokinase family. As to quaternary structure, homodimer. Mg(2+) is required as a cofactor. It depends on Mn(2+) as a cofactor.

It localises to the cytoplasm. The catalysed reaction is acetate + ATP = acetyl phosphate + ADP. Its pathway is metabolic intermediate biosynthesis; acetyl-CoA biosynthesis; acetyl-CoA from acetate: step 1/2. Functionally, catalyzes the formation of acetyl phosphate from acetate and ATP. Can also catalyze the reverse reaction. The polypeptide is Acetate kinase (Baumannia cicadellinicola subsp. Homalodisca coagulata).